Consider the following 726-residue polypeptide: MAGRDPRDRAPRVRNRAPAAVQITAEQLLREAQERQEPAIQAPKQRVQDLEELSEFQARKRTEFESRIRYSRDSILAWTKYAQWEASQNEYERSRSVFERALDVDPRSVDLWIKYTDMELKARNINHARNLFDRAITLLPRVDALWYKYVYLEELLLNVSGARQIFERWMQWEPNDKAWQSYIKLEERYNELDRASAIYERWIACRPIPKNWVTWAKFEEDRGQPDKAREVFQTALEFFGDEEEQVEKAQSVFAAFARMETRLKEFERARVIYKFALARLPRSKSASLYAQYTKFEKQHGDRAGVELTVLGKRRIQYEEELAYDPTNYDAWFSLARLEEDAYRADREDGEDVEPMRVREVYERAVANVPPALEKRYWRRYIYLWLQYAAFEEIDTKDYDRARDVYKAAVKLVPHKTFTFAKLWLAYAYFEIRRLDVSAARKVLGAGIGMCPKPKLFTGYIELEMRLREFDRVRTLYEKFLTYDPSLSSAWIQWTQVESAVEDFERVRAIFELAVQQSLDMPEIVWKAYIDFEAGEGERERARNLYERLLERTSHVKVWISYALMEIATLGGGEDEDGNEIEGEAGDADLARQVFERGYKDLRAKGEKEDRAVLLESWKSFEQEHGDEETLAKVEDMLPTTRKRWRKAEDGSGELEEYWDLVFPDDEREANPTSFKFFQAAQAWAQQRAGQGEEGGLSYDLPSDSEDENEDGDEDGDGREEEGMDQD.

16 HAT repeats span residues 55–87 (EFQA…WEAS), 89–121 (NEYE…MELK), 123–155 (RNIN…LEEL), 157–188 (LNVS…LEER), 190–221 (NELD…FEED), 223–262 (GQPD…METR), 264–298 (KEFE…FEKQ), 308–340 (TVLG…LEED), 352–386 (VEPM…LWLQ), 396–432 (KDYD…FEIR), 434–465 (LDVS…LEMR), 467–499 (REFD…VESA), 501–534 (EDFE…FEAG), 536–567 (GERE…MEIA), 585–626 (GDAD…EHGD), and 635–667 (DMLP…DDER). The interval 682–726 (AWAQQRAGQGEEGGLSYDLPSDSEDENEDGDEDGDGREEEGMDQD) is disordered. The segment covering 702–726 (SDSEDENEDGDEDGDGREEEGMDQD) has biased composition (acidic residues).

Belongs to the crooked-neck family. As to quaternary structure, associated with the spliceosome.

The protein localises to the nucleus. Functionally, involved in pre-mRNA splicing and cell cycle progression. Required for the spliceosome assembly and initiation of the DNA replication. The chain is Pre-mRNA-splicing factor CLF1 (CLF1) from Cryptococcus neoformans var. neoformans serotype D (strain B-3501A) (Filobasidiella neoformans).